The chain runs to 152 residues: Large ribosomal subunit protein bL9 (152 aa).

The protein belongs to the bacterial ribosomal protein bL9 family.

In terms of biological role, binds to the 23S rRNA. The sequence is that of Large ribosomal subunit protein bL9 from Saccharophagus degradans (strain 2-40 / ATCC 43961 / DSM 17024).